The primary structure comprises 534 residues: (E)-beta-farnesene synthase (534 aa).

Residues D287, D291, N431, S435, and E439 each contribute to the Mg(2+) site. The short motif at 287 to 291 (DDMMD) is the DDXXD motif element.

The protein belongs to the terpene synthase family. Requires Mg(2+) as cofactor. The cofactor is Co(2+). It depends on Mn(2+) as a cofactor.

The protein resides in the cytoplasm. The enzyme catalyses (2E,6E)-farnesyl diphosphate = (E)-beta-farnesene + diphosphate. It functions in the pathway secondary metabolite biosynthesis; terpenoid biosynthesis. In terms of biological role, sesquiterpene cyclase catalyzing the production of beta-farnesene and alpha-bergamotene in equal amounts from farnesyl diphosphate. Involved in indirect defense by producing volatile signals attracting natural enemies of herbivores. The sequence is that of (E)-beta-farnesene synthase from Zea mays subsp. mexicana (Mexican teosinte).